A 53-amino-acid chain; its full sequence is Small, acid-soluble spore protein O (53 aa).

Residues 1–53 (MVRKKANHSRPGMNAAKAQGKDAGLTSQFHAEIGQEPLNQAQRQNNKKRKKNQ) form a disordered region.

Belongs to the SspO family.

The protein localises to the spore core. This chain is Small, acid-soluble spore protein O, found in Halalkalibacterium halodurans (strain ATCC BAA-125 / DSM 18197 / FERM 7344 / JCM 9153 / C-125) (Bacillus halodurans).